Reading from the N-terminus, the 106-residue chain is Iron-sulfur cluster assembly protein CyaY (106 aa).

The protein belongs to the frataxin family.

Involved in iron-sulfur (Fe-S) cluster assembly. May act as a regulator of Fe-S biogenesis. This chain is Iron-sulfur cluster assembly protein CyaY, found in Escherichia coli O9:H4 (strain HS).